The following is a 945-amino-acid chain: Poly [ADP-ribose] polymerase 1 (945 aa).

The PARP-type 1 zinc finger occupies 10–96; the sequence is YAIEYAKSGR…KLRQEIQHFK (87 aa). Zn(2+)-binding residues include C22, C25, H54, and C57. The segment at 117–183 adopts a PARP-type 2; degenerate zinc-finger fold; sequence IKTEKSLSNR…DYEENFKIKA (67 aa). Positions 195 to 251 are disordered; sequence RRSTEPATPASASPTPPEAETPVLSAEGSPESSNKRPASSEIIEIDGEGNPDENDFA. A compositionally biased stretch (acidic residues) spans 237–248; it reads IEIDGEGNPDEN. One can recognise a PADR1 zinc-binding domain in the interval 258–397; sequence KEARLMEVQK…NQMSERLYIG (140 aa). The zinc ribbon stretch occupies residues 324 to 369; it reads GCPIICQTCSNGKIVYNSSCRTYVCTGYATEYSKCTYESKNPIRTP. Residues C329, C332, C348, and C358 each contribute to the Zn(2+) site. Residues 464 to 563 form the WGR domain; sequence RCHVFKNEID…KHFRKMPGMF (100 aa). The 119-residue stretch at 586–704 folds into the PARP alpha-helical domain; the sequence is KTLLPKSVKE…DIKFAYDQIS (119 aa). A PARP catalytic domain is found at 717-945; sequence DPVDINYQKL…RVKMHHARHL (229 aa).

The protein belongs to the ARTD/PARP family.

It localises to the nucleus. It catalyses the reaction NAD(+) + (ADP-D-ribosyl)n-acceptor = nicotinamide + (ADP-D-ribosyl)n+1-acceptor + H(+).. The enzyme catalyses L-aspartyl-[protein] + NAD(+) = 4-O-(ADP-D-ribosyl)-L-aspartyl-[protein] + nicotinamide. The catalysed reaction is L-glutamyl-[protein] + NAD(+) = 5-O-(ADP-D-ribosyl)-L-glutamyl-[protein] + nicotinamide. With respect to regulation, inhibited by N-(6-oxo-5,6-dihydrophenanthridin-2-yl)-N,N-dimethylacetamide HCl (PJ34), 1,5-dihydroxyisoquinoline (DHQ) and 3-aminobenzamide (3AB). Functionally, poly[ADP-ribose] polymerase modifies various nuclear proteins by poly(ADP-ribosyl)ation, a post-translational modification synthesized after DNA damage that appears as an obligatory step in a detection/signaling pathway leading to the reparation of DNA strand breaks and programmed cell death. Involved in protection of the genome against mutations. In Caenorhabditis elegans, this protein is Poly [ADP-ribose] polymerase 1.